The chain runs to 186 residues: Large ribosomal subunit protein uL15 (186 aa).

The disordered stretch occupies residues 1 to 48 (MDLSSLRPAKGAVKARKRVGRGPGSGNGTTAGKGNKGQQSRSGYQRPV). Over residues 21–35 (RGPGSGNGTTAGKGN) the composition is skewed to gly residues.

This sequence belongs to the universal ribosomal protein uL15 family. As to quaternary structure, part of the 50S ribosomal subunit.

Its function is as follows. Binds to the 23S rRNA. This Chlorobaculum tepidum (strain ATCC 49652 / DSM 12025 / NBRC 103806 / TLS) (Chlorobium tepidum) protein is Large ribosomal subunit protein uL15.